The primary structure comprises 1587 residues: Sister chromatid cohesion protein mis4 (1587 aa).

Positions 140–172 (PKEKPDASSINTNRSSSDNGFLTPSSSPRSPSC) are disordered. Positions 147-162 (SSINTNRSSSDNGFLT) are enriched in polar residues. A compositionally biased stretch (low complexity) spans 163–172 (PSSSPRSPSC). Residue S183 is modified to Phosphoserine. 6 HEAT repeats span residues 775 to 812 (LNLK…IPSI), 814 to 851 (RTHP…AYRE), 853 to 888 (IPQI…ATED), 890 to 927 (NIRV…SPAS), 1101 to 1140 (ATLM…ARHS), and 1183 to 1220 (DAYV…RETS).

This sequence belongs to the SCC2/Nipped-B family. Interacts with ssl3.

Its subcellular location is the nucleus. It is found in the chromosome. Plays a structural role in chromatin. Chromatid cohesion molecule required for equal sister chromatid separation in anaphase. May form a stable link between chromatids in S phase that is split rather than removed in anaphase. Also required for spindle-kinetochore interaction in early mitosis and inhibit sister chromatid separation until the cleavage of Rad21 in anaphase. This is Sister chromatid cohesion protein mis4 (mis4) from Schizosaccharomyces pombe (strain 972 / ATCC 24843) (Fission yeast).